The following is a 102-amino-acid chain: Small ribosomal subunit protein uS10 (102 aa).

It belongs to the universal ribosomal protein uS10 family. Part of the 30S ribosomal subunit.

In terms of biological role, involved in the binding of tRNA to the ribosomes. This is Small ribosomal subunit protein uS10 from Acidothermus cellulolyticus (strain ATCC 43068 / DSM 8971 / 11B).